Reading from the N-terminus, the 239-residue chain is Small ribosomal subunit protein uS3 (239 aa).

The KH type-2 domain maps to 39-107 (IREFIKEECK…ELHLNIVEVR (69 aa)). The span at 212-221 (PQARDRKAQE) shows a compositional bias: basic and acidic residues. A disordered region spans residues 212-239 (PQARDRKAQELQDGPAPRGAGGNRRGDR). The segment covering 230-239 (GAGGNRRGDR) has biased composition (gly residues).

It belongs to the universal ribosomal protein uS3 family. As to quaternary structure, part of the 30S ribosomal subunit. Forms a tight complex with proteins S10 and S14.

Functionally, binds the lower part of the 30S subunit head. Binds mRNA in the 70S ribosome, positioning it for translation. This chain is Small ribosomal subunit protein uS3, found in Ruegeria sp. (strain TM1040) (Silicibacter sp.).